The chain runs to 114 residues: Late cornified envelope protein 1D (114 aa).

Over residues 1-10 (MSCQQSQQQC) the composition is skewed to low complexity. Disordered regions lie at residues 1-21 (MSCQ…PKCT) and 75-114 (HHRR…GGCC). Positions 75–86 (HHRRHRSHRRRP) are enriched in basic residues. The segment covering 88 to 99 (SSDCCSQPSGGS) has biased composition (low complexity).

It belongs to the LCE family. As to quaternary structure, interacts with CYSRT1. Skin-specific. Expression was readily detected in adult trunk skin, adult arm skin, fetal skin, penal skin, vulva, esophagus and tongue. Not expressed in the cervix, rectum, lung, colon, or placenta.

Its function is as follows. Precursors of the cornified envelope of the stratum corneum. This chain is Late cornified envelope protein 1D (LCE1D), found in Homo sapiens (Human).